A 290-amino-acid polypeptide reads, in one-letter code: Ankyrin repeat and SOCS box protein 9 (290 aa).

N-acetylmethionine is present on Met-1. The span at 1–11 shows a compositional bias: basic and acidic residues; sequence MDGEQRGRSDR. The interval 1 to 20 is disordered; the sequence is MDGEQRGRSDRPGGSPHLPF. ANK repeat units lie at residues 31–60, 64–93, 97–126, 129–158, 162–191, and 194–223; these read SDWSPLHDAAIHGCLLTLRNLISQGWPVNI, DHVSPLHEACLRGHLSCASVLLSHGAQVNG, DWRTPLFNACVSGSQDCVNLLLQHGATPHP, ELASPIHEAAKRGYVKCIESLAAHGANIDY, HLGTPLYVACKNQQVACAKKLLESGVSVNQ, and GLDSPLHVVARMSSVELVHLLMDFGANAQA. Residues 236–290 enclose the SOCS box domain; the sequence is PLESPLIQIFLQNEGPQSLRQLCRLRIRKCFGIRQHHKISELLLPEDLKRFLLHL.

This sequence belongs to the ankyrin SOCS box (ASB) family. As to quaternary structure, substrate-recognition component of the ECS(ASB9) complex, composed of ASB9, CUL5, ELOB, ELOC and RNF7/RBX2.

Its subcellular location is the mitochondrion. The protein operates within protein modification; protein ubiquitination. In terms of biological role, substrate-recognition component of a cullin-5-RING E3 ubiquitin-protein ligase complex (ECS complex, also named CRL5 complex), which mediates the ubiquitination and subsequent proteasomal degradation of target proteins. The ECS(ASB9) complex catalyzes ubiquitination of creatine kinases CKB and CKMT1A. This chain is Ankyrin repeat and SOCS box protein 9, found in Mus musculus (Mouse).